A 109-amino-acid chain; its full sequence is Small ribosomal subunit protein uS17 (109 aa).

It belongs to the universal ribosomal protein uS17 family. As to quaternary structure, part of the 30S ribosomal subunit.

Functionally, one of the primary rRNA binding proteins, it binds specifically to the 5'-end of 16S ribosomal RNA. This is Small ribosomal subunit protein uS17 from Thermoplasma volcanium (strain ATCC 51530 / DSM 4299 / JCM 9571 / NBRC 15438 / GSS1).